We begin with the raw amino-acid sequence, 245 residues long: tRNA1(Val) (adenine(37)-N6)-methyltransferase (245 aa).

It belongs to the methyltransferase superfamily. tRNA (adenine-N(6)-)-methyltransferase family.

The protein resides in the cytoplasm. It carries out the reaction adenosine(37) in tRNA1(Val) + S-adenosyl-L-methionine = N(6)-methyladenosine(37) in tRNA1(Val) + S-adenosyl-L-homocysteine + H(+). Its function is as follows. Specifically methylates the adenine in position 37 of tRNA(1)(Val) (anticodon cmo5UAC). In Salmonella arizonae (strain ATCC BAA-731 / CDC346-86 / RSK2980), this protein is tRNA1(Val) (adenine(37)-N6)-methyltransferase.